A 197-amino-acid chain; its full sequence is Holliday junction branch migration complex subunit RuvA (197 aa).

The tract at residues Met-1 to Ser-64 is domain I. The tract at residues Ser-65 to Thr-143 is domain II. Residues Asn-144–Glu-153 are flexible linker. Positions Glu-153–Val-197 are domain III.

Belongs to the RuvA family. In terms of assembly, homotetramer. Forms an RuvA(8)-RuvB(12)-Holliday junction (HJ) complex. HJ DNA is sandwiched between 2 RuvA tetramers; dsDNA enters through RuvA and exits via RuvB. An RuvB hexamer assembles on each DNA strand where it exits the tetramer. Each RuvB hexamer is contacted by two RuvA subunits (via domain III) on 2 adjacent RuvB subunits; this complex drives branch migration. In the full resolvosome a probable DNA-RuvA(4)-RuvB(12)-RuvC(2) complex forms which resolves the HJ.

The protein resides in the cytoplasm. Its function is as follows. The RuvA-RuvB-RuvC complex processes Holliday junction (HJ) DNA during genetic recombination and DNA repair, while the RuvA-RuvB complex plays an important role in the rescue of blocked DNA replication forks via replication fork reversal (RFR). RuvA specifically binds to HJ cruciform DNA, conferring on it an open structure. The RuvB hexamer acts as an ATP-dependent pump, pulling dsDNA into and through the RuvAB complex. HJ branch migration allows RuvC to scan DNA until it finds its consensus sequence, where it cleaves and resolves the cruciform DNA. This is Holliday junction branch migration complex subunit RuvA from Herpetosiphon aurantiacus (strain ATCC 23779 / DSM 785 / 114-95).